The sequence spans 321 residues: MTKYALVGDVGGTNARLALCDMTSGEISQAKTYSGLDYPSLEAVVRVYLDEHNARVEDGCIAIACPITGDWVAMTNHTWAFSIAEMKKNLGFSHLEIINDFTAVSMAIPMLRKEHLIQFGGAEPVAGKPIAVYGAGTGLGVAHLVHVDKRWISLPGEGGHVDFAPNSEEEGIILEELRAEIGHVSAERVLSGPGLVNLYRAIVKSDGRLPENLQPKDITERALADTCIDSRRALSLFCVIMGRFGGNLALTLGTFGGVYIAGGIVPRFLEFFKASGFRGGFEDKGRFKAYVQDIPVYLIVHDNPGLLGSGAHLRQTLGQIL.

8–13 (GDVGGT) contributes to the ATP binding site.

It belongs to the bacterial glucokinase family.

The protein localises to the cytoplasm. The enzyme catalyses D-glucose + ATP = D-glucose 6-phosphate + ADP + H(+). The chain is Glucokinase from Citrobacter koseri (strain ATCC BAA-895 / CDC 4225-83 / SGSC4696).